Reading from the N-terminus, the 135-residue chain is Protein PsiE homolog (135 aa).

4 helical membrane-spanning segments follow: residues 20–40 (VGLI…TFHL), 54–74 (YMLI…ALIV), 82–102 (HFPL…LIIV), and 107–127 (PIDT…LYLA).

This sequence belongs to the PsiE family.

It localises to the cell inner membrane. This chain is Protein PsiE homolog, found in Yersinia enterocolitica serotype O:8 / biotype 1B (strain NCTC 13174 / 8081).